A 206-amino-acid polypeptide reads, in one-letter code: uncharacterized protein (206 aa).

Disordered stretches follow at residues 38-88 and 160-206; these read RLQQ…NKNA and HQNT…SVQE. Residues 40 to 73 are compositionally biased toward low complexity; sequence QQQQQQQQQQQQNRTASSLQQPQQQQPISPPLFL. Position 68 is a phosphoserine (Ser-68). Over residues 78 to 88 the composition is skewed to polar residues; it reads TSENSNLNKNA. The span at 165 to 186 shows a compositional bias: low complexity; that stretch reads SSSNPGSMSSSPPNSASSIFNS. The segment covering 192-206 has biased composition (polar residues); it reads PYTSQSFNPLESVQE.

The protein localises to the cytoplasm. This is an uncharacterized protein from Saccharomyces cerevisiae (strain ATCC 204508 / S288c) (Baker's yeast).